Consider the following 152-residue polypeptide: Putative aluminum-activated malate transporter 11 (152 aa).

Transmembrane regions (helical) follow at residues 48–68 (VIHA…YFME) and 78–98 (AIWA…VEGL).

This sequence belongs to the aromatic acid exporter (TC 2.A.85) family.

It localises to the membrane. In terms of biological role, malate transporter. This chain is Putative aluminum-activated malate transporter 11 (ALMT11), found in Arabidopsis thaliana (Mouse-ear cress).